The chain runs to 877 residues: Leucine--tRNA ligase (877 aa).

The 'HIGH' region signature appears at Pro-43–His-53. Positions Lys-628–Ser-632 match the 'KMSKS' region motif. Residue Lys-631 participates in ATP binding.

Belongs to the class-I aminoacyl-tRNA synthetase family.

It is found in the cytoplasm. The enzyme catalyses tRNA(Leu) + L-leucine + ATP = L-leucyl-tRNA(Leu) + AMP + diphosphate. This chain is Leucine--tRNA ligase, found in Brucella abortus (strain S19).